Consider the following 943-residue polypeptide: Isoleucine--tRNA ligase (943 aa).

The 'HIGH' region motif lies at 58–68; it reads PYANGSIHIGH. Residue Glu-567 coordinates L-isoleucyl-5'-AMP. Positions 608 to 612 match the 'KMSKS' region motif; that stretch reads KMSKS. Lys-611 provides a ligand contact to ATP. 4 residues coordinate Zn(2+): Cys-906, Cys-909, Cys-926, and Cys-929.

This sequence belongs to the class-I aminoacyl-tRNA synthetase family. IleS type 1 subfamily. As to quaternary structure, monomer. Zn(2+) serves as cofactor.

It is found in the cytoplasm. The catalysed reaction is tRNA(Ile) + L-isoleucine + ATP = L-isoleucyl-tRNA(Ile) + AMP + diphosphate. Functionally, catalyzes the attachment of isoleucine to tRNA(Ile). As IleRS can inadvertently accommodate and process structurally similar amino acids such as valine, to avoid such errors it has two additional distinct tRNA(Ile)-dependent editing activities. One activity is designated as 'pretransfer' editing and involves the hydrolysis of activated Val-AMP. The other activity is designated 'posttransfer' editing and involves deacylation of mischarged Val-tRNA(Ile). The sequence is that of Isoleucine--tRNA ligase from Pseudomonas paraeruginosa (strain DSM 24068 / PA7) (Pseudomonas aeruginosa (strain PA7)).